A 350-amino-acid chain; its full sequence is Arginine N-succinyltransferase (350 aa).

L125 provides a ligand contact to succinyl-CoA. Residue H229 is the Proton donor of the active site.

Belongs to the arginine N-succinyltransferase family.

The catalysed reaction is succinyl-CoA + L-arginine = N(2)-succinyl-L-arginine + CoA + H(+). It participates in amino-acid degradation; L-arginine degradation via AST pathway; L-glutamate and succinate from L-arginine: step 1/5. In terms of biological role, catalyzes the transfer of succinyl-CoA to arginine to produce N(2)-succinylarginine. The protein is Arginine N-succinyltransferase of Yersinia pseudotuberculosis serotype O:3 (strain YPIII).